The primary structure comprises 178 residues: Signaling threshold-regulating transmembrane adapter 1 (178 aa).

Over 1-23 (MSRENNCTTADLAWGIPSITQAW) the chain is Extracellular. Asn6 is a glycosylation site (N-linked (GlcNAc...) asparagine). The chain crosses the membrane as a helical; Signal-anchor for type III membrane protein span at residues 24–44 (GLWALFGVVTMLLLISLAALL). Residues 45 to 178 (SQWTRGRRRT…AYANSQPAPS (134 aa)) lie on the Cytoplasmic side of the membrane. A phosphoserine mark is found at Ser62 and Ser65. Tyr72 carries the post-translational modification Phosphotyrosine. Residues 72–75 (YGNL) form an interaction with GRB2 region. Residues 81–102 (GRLSEESRSEEQDPSSGGLARG) form a disordered region. Phosphoserine is present on residues Ser84, Ser87, and Ser89. Tyr109 bears the Phosphotyrosine mark. Phosphothreonine is present on Thr126. An interaction with PTPN11 region spans residues 128 to 133 (IKYCEV). Phosphotyrosine is present on residues Tyr130 and Tyr151. Residues 151–154 (YASV) form an interaction with CSK region. A Phosphoserine modification is found at Ser164. The residue at position 170 (Tyr170) is a Phosphotyrosine. The segment at 170-173 (YANS) is interaction with GRB2.

As to quaternary structure, homodimer; disulfide-linked. When phosphorylated, interacts with PTPN11/SHP2, GRB2 and CSK. Phosphorylated on tyrosines upon TCR activation; which promotes recruitment of PTPN11, GRB2 and CSK. Lymph node, spleen and thymus.

It is found in the cell membrane. Functionally, negatively regulates T-cell antigen receptor (TCR)-mediated signaling. Involved in positive selection of T-cells. In Rattus norvegicus (Rat), this protein is Signaling threshold-regulating transmembrane adapter 1 (Sit1).